A 636-amino-acid polypeptide reads, in one-letter code: Endoglucanase 4 (636 aa).

The signal sequence occupies residues 1–25 (MTRRWSFLVQCFTFKKKEGVRSRYM). The active-site Nucleophile is the D82. Active-site residues include H400, D438, and E447. The CBM3 domain occupies 478 to 635 (KVEDEFFVEA…GDLVFGTLPN (158 aa)).

It belongs to the glycosyl hydrolase 9 (cellulase E) family.

The protein resides in the secreted. It catalyses the reaction Endohydrolysis of (1-&gt;4)-beta-D-glucosidic linkages in cellulose, lichenin and cereal beta-D-glucans.. This is Endoglucanase 4 from Bacillus sp. (strain KSM-522).